Here is a 178-residue protein sequence, read N- to C-terminus: CDP-archaeol synthase (178 aa).

5 helical membrane passes run 3–23 (LLLL…ANAV), 56–76 (FFGI…VILY), 87–107 (LFGY…GDML), 123–145 (APIL…FYPL), and 150–169 (IVLL…IIAY).

Belongs to the CDP-archaeol synthase family. Requires Mg(2+) as cofactor.

The protein resides in the cell membrane. It carries out the reaction 2,3-bis-O-(geranylgeranyl)-sn-glycerol 1-phosphate + CTP + H(+) = CDP-2,3-bis-O-(geranylgeranyl)-sn-glycerol + diphosphate. It participates in membrane lipid metabolism; glycerophospholipid metabolism. Functionally, catalyzes the formation of CDP-2,3-bis-(O-geranylgeranyl)-sn-glycerol (CDP-archaeol) from 2,3-bis-(O-geranylgeranyl)-sn-glycerol 1-phosphate (DGGGP) and CTP. This reaction is the third ether-bond-formation step in the biosynthesis of archaeal membrane lipids. This is CDP-archaeol synthase from Methanococcus maripaludis (strain C6 / ATCC BAA-1332).